A 994-amino-acid polypeptide reads, in one-letter code: Glycine dehydrogenase (decarboxylating) (994 aa).

Positions 1–20 are disordered; that stretch reads MTDHAENRCGLEGPRPFSSR. Residue lysine 716 is modified to N6-(pyridoxal phosphate)lysine.

It belongs to the GcvP family. In terms of assembly, the glycine cleavage system is composed of four proteins: P, T, L and H. It depends on pyridoxal 5'-phosphate as a cofactor.

The enzyme catalyses N(6)-[(R)-lipoyl]-L-lysyl-[glycine-cleavage complex H protein] + glycine + H(+) = N(6)-[(R)-S(8)-aminomethyldihydrolipoyl]-L-lysyl-[glycine-cleavage complex H protein] + CO2. In terms of biological role, the glycine cleavage system catalyzes the degradation of glycine. The P protein binds the alpha-amino group of glycine through its pyridoxal phosphate cofactor; CO(2) is released and the remaining methylamine moiety is then transferred to the lipoamide cofactor of the H protein. The chain is Glycine dehydrogenase (decarboxylating) from Cutibacterium acnes (strain DSM 16379 / KPA171202) (Propionibacterium acnes).